The chain runs to 409 residues: MMKKNNSAKRGPQDGNQQPAPPEKVGWVRKFCGKGIFREIWKNRYVVLKGDQLYISEKEVKDEKNIQEVFDLSDYEKCEELRKSKSRSKKNHSKFTLAHSKQPGNTAPNLIFLAVSPEEKESWINALNSAITRAKNRILDEVTVEEDSYLAHPTRDRAKIQHSRRPPTRGHLMAVASTSTSDGMLTLDLIQEEDPSPEEPTSCAESFRVDLDKSVAQLAGSRRRADSDRIQPSADRASSLSRPWEKTDKGATYTPQAPKKLTPTEKGRCASLEEILSQRDAASARTLQLRAEEPPTPALPNPGQLSRIQDLVARKLEETQELLAEVQGLGDGKRKAKDPPRSPPDSESEQLLLETERLLGEASSNWSQAKRVLQEVRELRDLYRQMDLQTPDSHLRQTTPHSQYRKSLM.

The segment at 1–24 (MMKKNNSAKRGPQDGNQQPAPPEK) is disordered. Residues 21–132 (PPEKVGWVRK…WINALNSAIT (112 aa)) form the PH domain. Residues 133–193 (RAKNRILDEV…MLTLDLIQEE (61 aa)) are interaction with capping proteins (CPs). Residues 136–308 (NRILDEVTVE…LPNPGQLSRI (173 aa)) form an interaction with ATM, CKIP, IFP35 and NMI region. Positions 218–267 (LAGSRRRADSDRIQPSADRASSLSRPWEKTDKGATYTPQAPKKLTPTEKG) are disordered. 2 positions are modified to phosphoserine: serine 227 and serine 271. The negative regulator of AP-1 activity stretch occupies residues 308 to 409 (IQDLVARKLE…PHSQYRKSLM (102 aa)). 2 disordered regions span residues 325–350 (EVQG…ESEQ) and 390–409 (TPDS…KSLM). The segment covering 331–340 (DGKRKAKDPP) has biased composition (basic and acidic residues). Position 342 is a phosphoserine (serine 342). Polar residues predominate over residues 390-402 (TPDSHLRQTTPHS).

Heterodimer or homodimer. Interacts with CK2 and actin capping subunits (capping protein CP-alpha and CP-beta). CKIP1 and CK2 together inhibit the activity of actin capping protein at the barbed ends of actin filaments. Interacts with ATM, IFP35, JUN, JUND, NMI and PI3K. Interacts with AKT1, AKT2 and AKT3 (each isozyme of PKB), PtdIns(3,5)P2, PtdIns(4,5)P2 and PtdIns(3,4,5)P2. Post-translationally, C-terminal fragments could be released during apoptosis via caspase-3-dependent cleavage. As to expression, abundantly expressed in skeletal muscle and heart, moderately in kidney, liver, brain and placenta and sparingly in the pancreas and lung. Easily detectable in cell lines such as MOLT-4, HEK293 and Jurkat.

The protein localises to the cell membrane. It is found in the nucleus. Its subcellular location is the cytoplasm. Its function is as follows. Plays a role in the regulation of the actin cytoskeleton through its interactions with actin capping protein (CP). May function to target CK2 to the plasma membrane thereby serving as an adapter to facilitate the phosphorylation of CP by protein kinase 2 (CK2). Appears to target ATM to the plasma membrane. Appears to also inhibit tumor cell growth by inhibiting AKT-mediated cell-survival. Also implicated in PI3K-regulated muscle differentiation, the regulation of AP-1 activity (plasma membrane bound AP-1 regulator that translocates to the nucleus) and the promotion of apoptosis induced by tumor necrosis factor TNF. When bound to PKB, it inhibits it probably by decreasing PKB level of phosphorylation. This is Pleckstrin homology domain-containing family O member 1 (PLEKHO1) from Homo sapiens (Human).